The following is a 217-amino-acid chain: Nucleoredoxin-like protein 1 (217 aa).

One can recognise a Thioredoxin domain in the interval 1–164 (MASLFSGRIL…AAELLDRSFL (164 aa)). The span at 188–204 (VDRDVGRERGRNGRDSG) shows a compositional bias: basic and acidic residues. The segment at 188 to 217 (VDRDVGRERGRNGRDSGDPQGDAGTRAELW) is disordered.

It belongs to the nucleoredoxin family. Interacts with isoform 1 of BSG. Expressed in the retina (at protein level). Expressed predominantly by photoreceptors in both the inner and outer nuclear layer (at protein level). Not expressed in the testis, spleen, intestine, lung, cerebellum, or kidney.

The protein resides in the cell projection. It is found in the cilium. The protein localises to the photoreceptor outer segment. Plays an important role in retinal cone photoreceptor survival. In association with glucose transporter SLC16A1/GLUT1 and BSG, promotes retinal cone survival by enhancing aerobic glycolysis and accelerating the entry of glucose into photoreceptors. May play a role in cone cell viability, slowing down cone degeneration, does not seem to play a role in degenerating rods. This is Nucleoredoxin-like protein 1 (Nxnl1) from Mus musculus (Mouse).